We begin with the raw amino-acid sequence, 207 residues long: Superoxide dismutase [Mn] (207 aa).

Residues histidine 28, histidine 76, aspartate 160, and histidine 164 each coordinate Mn(2+).

It belongs to the iron/manganese superoxide dismutase family. The cofactor is Mn(2+).

The catalysed reaction is 2 superoxide + 2 H(+) = H2O2 + O2. Its function is as follows. Destroys superoxide anion radicals which are normally produced within the cells and which are toxic to biological systems. The chain is Superoxide dismutase [Mn] (sodA) from Mycobacterium avium.